We begin with the raw amino-acid sequence, 601 residues long: A-type ATP synthase subunit A (601 aa).

ATP is bound at residue 236-243 (GPFGSGKT).

This sequence belongs to the ATPase alpha/beta chains family. Has multiple subunits with at least A(3), B(3), C, D, E, F, H, I and proteolipid K(x).

It localises to the cell membrane. It catalyses the reaction ATP + H2O + 4 H(+)(in) = ADP + phosphate + 5 H(+)(out). Functionally, component of the A-type ATP synthase that produces ATP from ADP in the presence of a proton gradient across the membrane. The A chain is the catalytic subunit. In Hyperthermus butylicus (strain DSM 5456 / JCM 9403 / PLM1-5), this protein is A-type ATP synthase subunit A.